The following is a 597-amino-acid chain: Elongation factor 4 (597 aa).

The region spanning 2–184 (DHIRNFSIIA…ALIAKVPPPK (183 aa)) is the tr-type G domain. GTP is bound by residues 14-19 (DHGKST) and 131-134 (NKID).

This sequence belongs to the TRAFAC class translation factor GTPase superfamily. Classic translation factor GTPase family. LepA subfamily.

It is found in the cell inner membrane. It carries out the reaction GTP + H2O = GDP + phosphate + H(+). Required for accurate and efficient protein synthesis under certain stress conditions. May act as a fidelity factor of the translation reaction, by catalyzing a one-codon backward translocation of tRNAs on improperly translocated ribosomes. Back-translocation proceeds from a post-translocation (POST) complex to a pre-translocation (PRE) complex, thus giving elongation factor G a second chance to translocate the tRNAs correctly. Binds to ribosomes in a GTP-dependent manner. The sequence is that of Elongation factor 4 from Cupriavidus pinatubonensis (strain JMP 134 / LMG 1197) (Cupriavidus necator (strain JMP 134)).